Reading from the N-terminus, the 387-residue chain is 3-ketoacyl-CoA thiolase (387 aa).

The active-site Acyl-thioester intermediate is the Cys-91. Residues His-343 and Cys-373 each act as proton acceptor in the active site.

Belongs to the thiolase-like superfamily. Thiolase family. Heterotetramer of two alpha chains (FadB) and two beta chains (FadA).

It localises to the cytoplasm. The catalysed reaction is an acyl-CoA + acetyl-CoA = a 3-oxoacyl-CoA + CoA. The protein operates within lipid metabolism; fatty acid beta-oxidation. In terms of biological role, catalyzes the final step of fatty acid oxidation in which acetyl-CoA is released and the CoA ester of a fatty acid two carbons shorter is formed. The protein is 3-ketoacyl-CoA thiolase of Photobacterium profundum (strain SS9).